We begin with the raw amino-acid sequence, 114 residues long: uncharacterized protein (114 aa).

The 87-residue stretch at Tyr13 to Val99 folds into the ABM domain.

This is an uncharacterized protein from Bacillus subtilis (strain 168).